A 373-amino-acid polypeptide reads, in one-letter code: P2Y purinoceptor 1 (373 aa).

The Extracellular portion of the chain corresponds to 1-51 (MTEVPWSVVPNGTDAAFLAGLGSLWGNSTVASTAAVSSSFQCALTKTGFQF). N11 and N27 each carry an N-linked (GlcNAc...) asparagine glycan. 2 disulfide bridges follow: C42–C296 and C124–C202. Residue K46 coordinates ADP. A helical transmembrane segment spans residues 52 to 74 (YYLPAVYILVFIIGFLGNSVAIW). Topologically, residues 75-87 (MFVFHMKPWSGIS) are cytoplasmic. Residues 88–109 (VYMFNLALADFLYVLTLPALIF) traverse the membrane as a helical segment. Residues 110-125 (YYFNKTDWIFGDAMCK) lie on the Extracellular side of the membrane. N113 carries N-linked (GlcNAc...) asparagine glycosylation. A helical membrane pass occupies residues 126 to 147 (LQRFIFHVNLYGSILFLTCISA). Over 148 to 166 (HRYSGVVYPLKSLGRLKKK) the chain is Cytoplasmic. Residues 167–188 (NAIYVSVLVWLIVVVAISPILF) traverse the membrane as a helical segment. Residues 189–214 (YSGTGTRKNKTVTCYDTTSNDYLRSY) are Extracellular-facing. N-linked (GlcNAc...) asparagine glycosylation is present at N197. 203–205 (YDT) is an ADP binding site. A helical membrane pass occupies residues 215–237 (FIYSMCTTVAMFCIPLVLILGCY). Residues 238 to 260 (GLIVKALIYNDLDNSPLRRKSIY) lie on the Cytoplasmic side of the membrane. A helical transmembrane segment spans residues 261 to 284 (LVIIVLTVFAVSYIPFHVMKTMNL). ADP is bound by residues 283 to 287 (NLRAR), 303 to 306 (YATY), and R310. Residues 285–303 (RARLDFQTPEMCDFNDRVY) are Extracellular-facing. The chain crosses the membrane as a helical span at residues 304 to 325 (ATYQVTRGLASLNSCVDPILYF). The Cytoplasmic portion of the chain corresponds to 326–373 (LAGDTFRRRLSRATRKASRRSEANLQSKSEEMTLNILSEFKQNGDTSL).

Belongs to the G-protein coupled receptor 1 family.

It is found in the cell membrane. In terms of biological role, receptor for extracellular adenine nucleotides such as ADP. In platelets, binding to ADP leads to mobilization of intracellular calcium ions via activation of phospholipase C, a change in platelet shape, and ultimately platelet aggregation. This Mus musculus (Mouse) protein is P2Y purinoceptor 1 (P2ry1).